The primary structure comprises 964 residues: E3 ubiquitin-protein ligase TRIM37 (964 aa).

An N-acetylmethionine modification is found at methionine 1. The RING-type; degenerate zinc-finger motif lies at 15–55; that stretch reads CFICMEKLRDARLCPHCSKLCCFSCIRRWLTEQRAQCPHCR. Residues 90–132 form a B box-type zinc finger; the sequence is NEKDKCENHHEKLSVFCWTCKKCICHQCALWGGMHGGHTFKPL. Cysteine 95, histidine 98, cysteine 117, and histidine 124 together coordinate Zn(2+). Positions 132–234 form a coiled coil; it reads LAEIYEQHVT…VEHQLRSCSK (103 aa). One can recognise an MATH domain in the interval 276–403; the sequence is YDSATFVLEN…NDTVILRFQV (128 aa). A coiled-coil region spans residues 419–450; the sequence is ITQLEAAQTSYIQQINNLKERLTIELSRTQKS. Serine 454 carries the post-translational modification Phosphoserine. 3 disordered regions span residues 477-513, 530-554, and 640-663; these read CSDM…HHEL, QLDG…IDEE, and RPPA…RKQQ. Basic and acidic residues predominate over residues 503 to 513; that stretch reads KIQNEDYHHEL. The segment covering 534 to 544 has biased composition (low complexity); the sequence is SSSSASSTATS. Residues 673–700 are a coiled coil; sequence KMLKRLKTQMAEVRCMKTDVKNTLSEIK. Residues 752–761 show a composition bias toward polar residues; it reads NSTNKKSNSP. 2 disordered regions span residues 752-812 and 891-964; these read NSTN…SPRA and GASA…NSGR. Basic and acidic residues predominate over residues 776-788; it reads RAVDPGENSRSKG. Low complexity predominate over residues 794-807; the sequence is SEGSPGSSQSGSRH. A compositionally biased stretch (acidic residues) spans 904-916; the sequence is SDIECDTENEEQE. Polar residues predominate over residues 955 to 964; that stretch reads SFNTDENSGR.

Belongs to the TRIM/RBCC family. Associates with the PRC2/EED-EZH2 complex. Post-translationally, auto-ubiquitinated. In terms of tissue distribution, ubiquitous. Highly expressed in testis, while it is weakly expressed in other tissues.

It is found in the chromosome. The protein resides in the cytoplasm. Its subcellular location is the perinuclear region. It localises to the peroxisome membrane. It carries out the reaction S-ubiquitinyl-[E2 ubiquitin-conjugating enzyme]-L-cysteine + [acceptor protein]-L-lysine = [E2 ubiquitin-conjugating enzyme]-L-cysteine + N(6)-ubiquitinyl-[acceptor protein]-L-lysine.. The protein operates within protein modification; protein ubiquitination. Its function is as follows. E3 ubiquitin-protein ligase required to prevent centriole reduplication. Probably acts by ubiquitinating positive regulators of centriole reduplication. Mediates monoubiquitination of 'Lys-119' of histone H2A (H2AK119Ub), a specific tag for epigenetic transcriptional repression: associates with some Polycomb group (PcG) multiprotein PRC2-like complex and mediates repression of target genes. Also acts as a positive regulator of peroxisome import by mediating monoubiquitination of PEX5 at 'Lys-472': monoubiquitination promotes PEX5 stabilitation by preventing its polyubiquitination and degradation by the proteasome. Has anti-HIV activity. The protein is E3 ubiquitin-protein ligase TRIM37 of Homo sapiens (Human).